Consider the following 234-residue polypeptide: MLTYETWEEDSMSFSERDETKGALAVLEWAYKQYNDEIVYACSFGVEGMVLLHLINEVNPFAQVVFLDTNVHFCETYALIERVRQRFPKLNIIEKQPGLTLEEQEDKYGKDLWEHNPNLCCKLRKILPLEELLANKNAWISGLRREQSETRKHTKFINQDHRFQSIKICPLIHWTWKEVWRYVYKHNLPYNPLHDVGYPSIGCEKCTLPVGKYGSSRDGRWAGSVKTECGLHDQ.

[4Fe-4S] cluster contacts are provided by C120, C121, C203, and C206. C229 acts as the Nucleophile; cysteine thiosulfonate intermediate in catalysis.

The protein belongs to the PAPS reductase family. CysH subfamily. Requires [4Fe-4S] cluster as cofactor.

It localises to the cytoplasm. The enzyme catalyses [thioredoxin]-disulfide + sulfite + AMP + 2 H(+) = adenosine 5'-phosphosulfate + [thioredoxin]-dithiol. It participates in sulfur metabolism; hydrogen sulfide biosynthesis; sulfite from sulfate. In terms of biological role, catalyzes the formation of sulfite from adenosine 5'-phosphosulfate (APS) using thioredoxin as an electron donor. The polypeptide is Adenosine 5'-phosphosulfate reductase (Bacillus cytotoxicus (strain DSM 22905 / CIP 110041 / 391-98 / NVH 391-98)).